Here is a 688-residue protein sequence, read N- to C-terminus: Polyribonucleotide nucleotidyltransferase (688 aa).

Residues aspartate 484 and aspartate 490 each coordinate Mg(2+). The 60-residue stretch at 550–609 folds into the KH domain; that stretch reads PTTEIFNVAPDKIVEIIGQGGRVIKEIVEKFEVKIDLNKPSGEVKIMGNKERVLKTKEFI. Residues 626 to 688 enclose the S1 motif domain; sequence DEVLEAQVKR…NKGKIALDLA (63 aa).

The protein belongs to the polyribonucleotide nucleotidyltransferase family. The cofactor is Mg(2+).

The protein localises to the cytoplasm. It catalyses the reaction RNA(n+1) + phosphate = RNA(n) + a ribonucleoside 5'-diphosphate. Involved in mRNA degradation. Catalyzes the phosphorolysis of single-stranded polyribonucleotides processively in the 3'- to 5'-direction. This is Polyribonucleotide nucleotidyltransferase from Helicobacter pylori (strain HPAG1).